The chain runs to 61 residues: Large ribosomal subunit protein bL32 (61 aa).

Belongs to the bacterial ribosomal protein bL32 family.

The chain is Large ribosomal subunit protein bL32 from Syntrophus aciditrophicus (strain SB).